We begin with the raw amino-acid sequence, 555 residues long: Probable portal protein (555 aa).

Belongs to the podoviridae head-to-tail connector protein family. As to quaternary structure, homododecamer.

The protein resides in the virion. Functionally, forms the portal vertex of the capsid. This portal plays critical roles in head assembly, genome packaging, neck/tail attachment, and genome ejection. The portal protein multimerizes as a single ring-shaped homododecamer arranged around a central channel. This Bordetella bronchiseptica (Alcaligenes bronchisepticus) protein is Probable portal protein.